Here is a 66-residue protein sequence, read N- to C-terminus: Large ribosomal subunit protein uL30 (66 aa).

Belongs to the universal ribosomal protein uL30 family. In terms of assembly, part of the 50S ribosomal subunit.

This is Large ribosomal subunit protein uL30 from Azorhizobium caulinodans (strain ATCC 43989 / DSM 5975 / JCM 20966 / LMG 6465 / NBRC 14845 / NCIMB 13405 / ORS 571).